The sequence spans 2617 residues: MVTTTRATNPTNTLLLFGPQALSFSTATFADIHARVVQTSENAWIKQTITSLPGLWDALVKEFPQYGALEGKQLLRDLDRWFETGTMEHAEPHLPNILLSPMVVITQLTEYVDYLKTMPHAADQQTETVGFCTGLLTALAASLASDIKGIRQYGAIAIKLAMIIGAVVDVQDITSPNGPSKSLAVAWDSAETQDRLNQIIDQSPEVYISVEYDYNRATITTAARSISSLQQRLRNAGLIASEIGLRGRFHCACYKNDIEALSKFCDSVPSLCLPDAAVLVLPTRSNDAGSFILSGKLHHCALRSILLDTSHWYQTLEVIRQSCLKSPSSMVVSFGPERCIPPSILKGLSSIVTTAAEYQPSYLHRDPELCNPNEIAVIGMSCKVAGADDVDEFWDLLCKAESQHQEVPKERFGFESAFREVDPTRKWYGNFINEHDCFDHKFFKKSAREIAATDPQQRQMLQVAYQAVEQSGYFTTPKSDKDRKIGCYIGVCAADYEYNVACHPPNAFMATGNLKSFVAGKISHWFGWTGPGLCIDTACSSSLVAVHQACQAILTGDCTAALAGGANIITHPLWYQNLAAASFLSPTGQCKPFDASADGYCRGEGFAAVFLKKMSAAIADGDMIIGSIKATAVNQNQNCTPVFVPNAPTLSDLFRDVLDRSQLTANQITVVEAHGTGTQVGDPAEYQSIRNVLGGPSRSTPLLFGSVKGLVGHTECTSGAVSLVKTLLMQQHEAIPPQPSFDRLNPEIPVSESDNMQIATRFSPWTAEYRAALINNYGACGSNASMVVAQAPRTEQRRSATRRTSVVLDYPFRLCGSDDRALRAYSERLLRFIASGIKDGISVADLAFNVCRQSNPTLDRSLAFACRTTQEVEEKLRAFVAGNQGLIATSRSKTPREVILCFGGQISNYVGLDREVYDNVALLRKHLAICDAACRDLGVDSIFPGIFQKSPISDPVKLQTILFSTQYSSAKAWMDSGVRPVAAVGHSFGELTALCATGILSLADAMKMIVGRATVIRDFWGEDKGSMIAVEADENRVQRLLAEAAKQCELIHARAPTIACVNGPTSYTLAGPVKSIDIVTEVISKLSDSGPSIRSKRLKVTNAFHSTLVEPLMEELEKVGQHLTFNTPTMQLERAIKHYSDATLTSDYVYDHMRNPVYFNQAVQRLAQQYPDSVWLEAGSNSTITSMASRALGSPRSLHFQAVNITSDDSWSMLITSTLSLWKQGISTNFWAYHAEQTYEYNPVLLPPYQFEPSRHWMELKVPSSMNNGKVQCGARDEEGPPKTLWSLIEASDKVARFQINTAAPKYVELVSGHVIANTAPICPATVEVDIVVEALRSLRPDFMDSNLQPQVLAVTNQSPICIDPNRSVWLECQAMDSNSVWEWRIVSDSLQEPGTSSSAHVLGKLAFLSGQDEVKQQESEFMRLERLIGHQRCVDLLNTTEADDIIQGRNIYTTFAGVVDYGEQYRGLKKIVGKGLESAGRVQKKPSEESWLDAHLGDCFSQVGGIWVNCMTDHNPDDMFIATGFEKWVRSPALRHGQPRSEIWDVLACHHRSSEQTYLTDIFIFDAEQGALTEVILGINYHKVAKASMSKILSRLSGTEAAPSSSTRAHPTSSSSPRLPGPSVPEDKSQNETQPAGTNAVAKKKSEKSAQQNVLEKTRALLAEISGLEPSEIEAETGLADIGIDSLMGMELARDLEALFKCPLLGDELANVTTFQGLVEYVQSAVGVPTNGDEPDNTNADEVSEEDNLAPSPSSSSSSTNLTEDSSLDQAETTTNISSYPGQTKTEKPAMPPASSKTLELSPSWVLEAFEESKRLTDHFIEQYRCANYVDTTLPKQTQLCVALTVEAFEQLGCPIRTAVAGQKLERIIHIPKHAQLAQYLYRLLSADARLIDLTEDGRITRTHMALPKPSDQILQDLLRLYPDHEWANRLAAFTGARLAEVLKGETDGLGLIFGTDEGRELVAGLYGDSLLNKLSYRQMEDIITRLASRIPRDSGPLKILEMGAGTGGTTKGMAPLLARLGIPVEYTFTDLSGSFVAAARKKYQKEYPFMKFQVHDIEKPPSDQLRHSQHIVIASNAIHATHSLTDSSRHVREFLKTDGFLMIVEMTQPVHWVDIIFGLFDGWWLFADGRDHAIASAGWWEKVFQSVGYGQVDWTDGHRPEVQIQRVIIAFASGPRYGRQPLPPAPPPNLVPGSHASRQAAVNEYLDKYTKGFTLPAQTSNPDISNSTSYWEKQCVLITGATGSLGVHLVAAVAALDDVQTVICLNRRSPMDPDLRQQQAFERRGILLEAASMSKIRVLQTDSSKPQLGLTDEVYSSLVTSTTHIIHNAWPMTGKRPLSGLEQQFQVMRNLLDLAAQCSSTRPANVPRIVFQFISSIATVGYYPLWSGQTLVPETCMGIESVLANGYGEAKYVCEQMLDRTLHQYPDRFRAMAVRLGQIAGSRTSGYWNPMEHLSFLFKSAQTLQVFPDFTGDLCWTPVNDVAATLSDLLLLSPHSSSMTDQPIYHIDNPVRQSWSEMVPVLIDALGIPAQNVFPFADWVCRVRAFPGQVEWDNPAALLIDFLDDHFLRMSCGGLLLDTKRACEHSPTLAAVGPVTAELARKYIQSWKEMGFLNP.

The segment at 95–231 (PNILLSPMVV…AARSISSLQQ (137 aa)) is N-terminal acylcarrier protein transacylase domain (SAT). Cys-132 functions as the Nucleophile; for transacylase activity in the catalytic mechanism. The Proton donor/acceptor; for transacylase activity role is filled by His-250. The region spanning 372–790 (PNEIAVIGMS…GSNASMVVAQ (419 aa)) is the Ketosynthase family 3 (KS3) domain. Catalysis depends on for beta-ketoacyl synthase activity residues Cys-539, His-674, and His-713. The interval 902-1193 (FGGQISNYVG…ITSMASRALG (292 aa)) is malonyl-CoA:ACP transacylase (MAT) domain. Residues 1282-1413 (PKTLWSLIEA…GKLAFLSGQD (132 aa)) form an N-terminal hotdog fold region. In terms of domain architecture, PKS/mFAS DH spans 1282–1591 (PKTLWSLIEA…YHKVAKASMS (310 aa)). The interval 1310-1589 (LVSGHVIANT…INYHKVAKAS (280 aa)) is product template (PT) domain. Catalysis depends on His-1314, which acts as the Proton acceptor; for dehydratase activity. The C-terminal hotdog fold stretch occupies residues 1443 to 1591 (ADDIIQGRNI…YHKVAKASMS (149 aa)). The Proton donor; for dehydratase activity role is filled by Asp-1499. Positions 1600–1651 (TEAAPSSSTRAHPTSSSSPRLPGPSVPEDKSQNETQPAGTNAVAKKKSEKSA) are disordered. The span at 1602–1619 (AAPSSSTRAHPTSSSSPR) shows a compositional bias: low complexity. Residues 1653 to 1727 (QNVLEKTRAL…GLVEYVQSAV (75 aa)) form the Carrier domain. Ser-1687 bears the O-(pantetheine 4'-phosphoryl)serine mark. The disordered stretch occupies residues 1728-1799 (GVPTNGDEPD…PAMPPASSKT (72 aa)). Over residues 1750–1766 (LAPSPSSSSSSTNLTED) the composition is skewed to low complexity. Residues 1769–1785 (LDQAETTTNISSYPGQT) are compositionally biased toward polar residues. The methyltransferase domain stretch occupies residues 1970–2158 (DSLLNKLSYR…VGYGQVDWTD (189 aa)). The segment at 2240–2485 (ITGATGSLGV…LCWTPVNDVA (246 aa)) is NADPH-binding (R) domain.

Pantetheine 4'-phosphate is required as a cofactor.

The protein operates within secondary metabolite biosynthesis. Functionally, non-reducing polyketide synthase; part of the gene cluster that mediates the biosynthesis of nigerpyrone and its derivatives carbonarone A and pestalamide A. The biosynthesis pathway begins with the polyketide assembly by epaA to form phenylacetyl triketide precursor from successive condensation of two malonyl-CoA, presumably with one phenylacetyl-CoA starter unit produced by the phenylacetyl-CoA ligase epaB. For the nigerpyrone biosynthesis, the reactive polyketide chain is released as an aldehyde through the R-domain. A nonenzymatic cyclization and dehydration may create nigerpyrone. For the biosynthesis of carbonarone A and pestalamide A, an extra methyl group is added through the C-methyltransferase domain. Several further steps involving the dehydrogenase orf1, the cytochrome P450 monooxygenase orf2 and the FAD-dependent monooxygenase orf3 are required to form a carbonarone A precursor which is converted to carbonarone A via cyclization. The O-acetyltransferase epaC could catalyze the transfer of 2-methylsuccinyl-CoA, a common intermediate in the ethylmalonyl-CoA pathway, to generate the final product pestalamide A. This is Non-reducing polyketide synthase epaA from Aspergillus niger (strain ATCC MYA-4892 / CBS 513.88 / FGSC A1513).